A 421-amino-acid chain; its full sequence is Zinc metalloproteinase-disintegrin-like lachestatin-1 (421 aa).

In terms of domain architecture, Peptidase M12B spans 10–206 (KYVKLVLVAD…DMPQCILEKP (197 aa)). 3 disulfide bridges follow: C121–C201, C161–C185, and C163–C168. H146 serves as a coordination point for Zn(2+). E147 is a catalytic residue. Zn(2+) is bound by residues H150 and H156. Positions 214–299 (PPVCGNYFVE…AECTDRFQRN (86 aa)) constitute a Disintegrin domain. V216, N219, F221, E223, E226, and D229 together coordinate Ca(2+). Disulfide bonds link C217–C246, C228–C241, C230–C236, C240–C263, C254–C260, C259–C285, C272–C292, C279–C310, C303–C315, C322–C372, C337–C383, C350–C360, C367–C409, and C403–C414. The short motif at 278–280 (ECD) is the D/ECD-tripeptide element. Positions 280, 281, 283, 294, and 295 each coordinate Ca(2+). N312 carries N-linked (GlcNAc...) asparagine glycosylation.

This sequence belongs to the venom metalloproteinase (M12B) family. P-III subfamily. P-IIIc sub-subfamily. Homodimer; disulfide-linked. Zn(2+) is required as a cofactor. In terms of tissue distribution, expressed by the venom gland.

It is found in the secreted. Its function is as follows. Snake venom zinc metalloprotease that induces apoptosis in vascular endothelial cells (VEC), without degrading the extracellular matrix (it cannot cleave collagen) or inhibiting adhesion of VEC. Has also fibrinogenolytic and hemorrhagic activities. This is Zinc metalloproteinase-disintegrin-like lachestatin-1 from Lachesis muta rhombeata (Bushmaster).